The primary structure comprises 336 residues: Phospho-N-acetylmuramoyl-pentapeptide-transferase (336 aa).

10 helical membrane-spanning segments follow: residues 3–23, 53–73, 78–98, 118–138, 143–163, 174–194, 200–220, 226–246, 251–271, and 316–336; these read LTLI…PYFI, GGTV…LFSI, SLAL…IGFL, LALQ…PSGI, VFGY…FWVV, GIDG…GVIA, FDVL…FCFN, VFMG…ISIA, WTLL…MLQV, and AFLW…LYVF.

The protein belongs to the glycosyltransferase 4 family. MraY subfamily. The cofactor is Mg(2+).

It is found in the cell membrane. The catalysed reaction is UDP-N-acetyl-alpha-D-muramoyl-L-alanyl-gamma-D-glutamyl-L-lysyl-D-alanyl-D-alanine + di-trans,octa-cis-undecaprenyl phosphate = Mur2Ac(oyl-L-Ala-gamma-D-Glu-L-Lys-D-Ala-D-Ala)-di-trans,octa-cis-undecaprenyl diphosphate + UMP. It functions in the pathway cell wall biogenesis; peptidoglycan biosynthesis. Catalyzes the initial step of the lipid cycle reactions in the biosynthesis of the cell wall peptidoglycan: transfers peptidoglycan precursor phospho-MurNAc-pentapeptide from UDP-MurNAc-pentapeptide onto the lipid carrier undecaprenyl phosphate, yielding undecaprenyl-pyrophosphoryl-MurNAc-pentapeptide, known as lipid I. This chain is Phospho-N-acetylmuramoyl-pentapeptide-transferase, found in Streptococcus pyogenes serotype M3 (strain ATCC BAA-595 / MGAS315).